Consider the following 260-residue polypeptide: NAD-capped RNA hydrolase NudC (260 aa).

Arginine 69 lines the substrate pocket. Residues cysteine 98 and cysteine 101 each coordinate Zn(2+). Glutamate 111 is a substrate binding site. Residues cysteine 116 and cysteine 119 each contribute to the Zn(2+) site. Position 124 (tyrosine 124) interacts with substrate. The 124-residue stretch at 125–248 (PQIAPCIIVA…TVARRLIEDT (124 aa)) folds into the Nudix hydrolase domain. Residues alanine 158, glutamate 174, and glutamate 178 each coordinate a divalent metal cation. The short motif at 159-180 (GFVEVGETLEQTVVREVMEESQ) is the Nudix box element. Position 192 to 199 (192 to 199 (QPWPFPHS)) interacts with substrate. An a divalent metal cation-binding site is contributed by glutamate 219. Alanine 241 is a binding site for substrate.

It belongs to the Nudix hydrolase family. NudC subfamily. As to quaternary structure, homodimer. Requires Mg(2+) as cofactor. The cofactor is Mn(2+). Zn(2+) is required as a cofactor.

It carries out the reaction a 5'-end NAD(+)-phospho-ribonucleoside in mRNA + H2O = a 5'-end phospho-adenosine-phospho-ribonucleoside in mRNA + beta-nicotinamide D-ribonucleotide + 2 H(+). The enzyme catalyses NAD(+) + H2O = beta-nicotinamide D-ribonucleotide + AMP + 2 H(+). It catalyses the reaction NADH + H2O = reduced beta-nicotinamide D-ribonucleotide + AMP + 2 H(+). MRNA decapping enzyme that specifically removes the nicotinamide adenine dinucleotide (NAD) cap from a subset of mRNAs by hydrolyzing the diphosphate linkage to produce nicotinamide mononucleotide (NMN) and 5' monophosphate mRNA. The NAD-cap is present at the 5'-end of some mRNAs and stabilizes RNA against 5'-processing. Has preference for mRNAs with a 5'-end purine. Catalyzes the hydrolysis of a broad range of dinucleotide pyrophosphates. This chain is NAD-capped RNA hydrolase NudC, found in Pectobacterium carotovorum subsp. carotovorum (strain PC1).